The following is a 147-amino-acid chain: D(1B) dopamine receptor (147 aa).

Residues 1–12 (SILISFPVQLNW) form a helical membrane-spanning segment. At 13–55 (HRDQAGSWGGLDLTNNLANWTPWEEDVWEPDVRAENCDSSLNR) the chain is on the extracellular side. An N-linked (GlcNAc...) asparagine glycan is attached at asparagine 54. Residues 56-78 (TYAISSSLVSFYIPVAIMIVTYT) traverse the membrane as a helical segment. Residues 79-128 (RIYRIAQVQIRRISSLERAAEHAQSCRSSAACAPDTSLRASIKKETKVLK) are Cytoplasmic-facing. A helical membrane pass occupies residues 129 to 147 (TLSVIMGVFVCCWLPFFIL).

Belongs to the G-protein coupled receptor 1 family.

The protein localises to the cell membrane. Dopamine receptor whose activity is mediated by G proteins which activate adenylyl cyclase. This is D(1B) dopamine receptor (DRD5) from Macaca mulatta (Rhesus macaque).